Reading from the N-terminus, the 509-residue chain is 3-octaprenyl-4-hydroxybenzoate carboxy-lyase (509 aa).

N179 is a Mn(2+) binding site. Residues 182–184 (IYR), 196–198 (RWL), and 201–202 (RG) each bind prenylated FMN. Mn(2+) is bound at residue E245. Catalysis depends on D304, which acts as the Proton donor.

It belongs to the UbiD family. Homohexamer. Prenylated FMN serves as cofactor. It depends on Mn(2+) as a cofactor.

The protein localises to the cell membrane. It catalyses the reaction a 4-hydroxy-3-(all-trans-polyprenyl)benzoate + H(+) = a 2-(all-trans-polyprenyl)phenol + CO2. The protein operates within cofactor biosynthesis; ubiquinone biosynthesis. Functionally, catalyzes the decarboxylation of 3-octaprenyl-4-hydroxy benzoate to 2-octaprenylphenol, an intermediate step in ubiquinone biosynthesis. In Cupriavidus pinatubonensis (strain JMP 134 / LMG 1197) (Cupriavidus necator (strain JMP 134)), this protein is 3-octaprenyl-4-hydroxybenzoate carboxy-lyase.